The following is an 892-amino-acid chain: Translation initiation factor IF-2 (892 aa).

A disordered region spans residues 88–305 (KKRTFVKRDP…SLQQGFQKPA (218 aa)). Composition is skewed to basic and acidic residues over residues 93-159 (VKRD…KDKV) and 166-216 (DMTK…EENK). Over residues 254-269 (GRGRNAKAARPAKKGK) the composition is skewed to basic residues. The segment covering 270 to 282 (HAESKADREEARA) has biased composition (basic and acidic residues). In terms of domain architecture, tr-type G spans 391 to 560 (PRAPVVTIMG…LLQAEVLELK (170 aa)). The G1 stretch occupies residues 400 to 407 (GHVDHGKT). 400-407 (GHVDHGKT) provides a ligand contact to GTP. The tract at residues 425–429 (GITQH) is G2. The tract at residues 446-449 (DTPG) is G3. Residues 446–450 (DTPGH) and 500–503 (NKID) contribute to the GTP site. Positions 500-503 (NKID) are G4. The interval 536–538 (SAK) is G5.

The protein belongs to the TRAFAC class translation factor GTPase superfamily. Classic translation factor GTPase family. IF-2 subfamily.

It is found in the cytoplasm. In terms of biological role, one of the essential components for the initiation of protein synthesis. Protects formylmethionyl-tRNA from spontaneous hydrolysis and promotes its binding to the 30S ribosomal subunits. Also involved in the hydrolysis of GTP during the formation of the 70S ribosomal complex. This Salmonella paratyphi A (strain ATCC 9150 / SARB42) protein is Translation initiation factor IF-2.